We begin with the raw amino-acid sequence, 224 residues long: Coiled-coil domain-containing protein 43 (224 aa).

Lys-95 is covalently cross-linked (Glycyl lysine isopeptide (Lys-Gly) (interchain with G-Cter in SUMO1)). Coiled-coil stretches lie at residues 121-145 (SEEE…EDEA) and 177-218 (RKLE…KRTQ). Positions 138–149 (VTDEEDEADEKD) are enriched in acidic residues. 2 disordered regions span residues 138–157 (VTDE…TTMN) and 176–224 (ARKL…ERKR). Thr-139 bears the Phosphothreonine mark. Residues 176–211 (ARKLERDSLRDESQRKKEQDKLQRERDKLAKQERKE) show a composition bias toward basic and acidic residues. The segment covering 212–224 (KEKKRTQRGERKR) has biased composition (basic residues).

This sequence belongs to the CCDC43 family.

This is Coiled-coil domain-containing protein 43 (CCDC43) from Homo sapiens (Human).